The primary structure comprises 215 residues: S-crystallin 2 (215 aa).

The GST N-terminal domain occupies 2–80; the sequence is PSYTLNYFNH…YLAREFGFHG (79 aa). The region spanning 82–215 is the GST C-terminal domain; that stretch reads NNMEMARVEY…YLKKRSSTEF (134 aa).

This sequence belongs to the GST superfamily. In terms of tissue distribution, lens.

In terms of biological role, S-crystallins are structural components of squids and octopi eye lens. Contains relatively little if any GST activity. This is S-crystallin 2 from Enteroctopus dofleini (North Pacific giant octopus).